Reading from the N-terminus, the 300-residue chain is Transacylase cctO (300 aa).

The chain crosses the membrane as a helical span at residues Ile52 to Ile72. Short sequence motifs (HXXHC) lie at residues His185 to Cys189 and His225 to Cys229. Asn270 carries an N-linked (GlcNAc...) asparagine glycan.

This sequence belongs to the ustYa family.

The protein localises to the membrane. Its pathway is mycotoxin biosynthesis. Functionally, transacylase; part of the gene cluster that mediates the biosynthesis of the mycotoxin cyclochlorotine, a hepatotoxic and carcinogenic cyclic chlorinated pentapeptide. Within the pathway, cctO catalyzes the intramolecular O,N-transacylation from isocyclochlorotine to cyclochlorotine. The NRPS cctN initially catalyzes the condensation of L-serine (Ser), Pro, L-2-aminobutyrate (2Abu), Ser, and beta-Phe in this order to produce isocyclotine. After the dichlorination of Pro2 catalyzed by cctP2 to produce isocyclochlorotine, the cctO-mediated transacylation of isocyclochlorotine can furnish cyclochlorotine. The subsequent hydroxylation of cyclochlorotine by cctR yields hydroxycyclochlorotine as the final product. CctP1 probably acts as a phenylalanine aminomutase and provides the uncommon building block beta-Phe. Furthermore, 2Abu can be synthesized from threonine by one of the threonine dehydratases and transaminases localized outside of the cluster. The functions of the remaining proteins encoded by the cluster, cctM and cctT, have not been identified yet. The chain is Transacylase cctO from Talaromyces islandicus (Penicillium islandicum).